Here is a 144-residue protein sequence, read N- to C-terminus: MNFKYIVAVSFLIASAYARSVQNDEQSLSQRDVLEEESLREIRGIGGKILSGLKTALKGAAKELASTYLHRKRTAEEHEVMKRLEAVMRDLDSLDYPEEASERETRGFNQDEIANLFTKKEKRILGPVLGLVGEPLGGLIKKIG.

Positions 1–18 (MNFKYIVAVSFLIASAYA) are cleaved as a signal peptide. Propeptides lie at residues 19 to 43 (RSVQ…REIR) and 73 to 122 (RTAE…KKEK). Residue Ile-143 is modified to Isoleucine amide.

This sequence belongs to the bombinin family. In terms of tissue distribution, expressed by the skin glands.

The protein resides in the secreted. Maximin-3 shows antibacterial activity against both Gram-positive and Gram-negative bacteria. It also shows antimicrobial activity against the fungus C.albicans, but not against A.flavus nor P.uticale. It has little hemolytic activity. It possess a significant cytotoxicity against tumor cell lines. It possess a significant anti-HIV activity. It shows high spermicidal activity. Its function is as follows. Maximin-H14 shows antimicrobial activity against bacteria and against the fungus C.albicans. Shows strong hemolytic activity. The protein is Maximins 3/H14 of Bombina maxima (Giant fire-bellied toad).